The chain runs to 239 residues: Ribonuclease PH (239 aa).

Phosphate is bound by residues Arg-86 and 124–126 (GTR).

It belongs to the RNase PH family. As to quaternary structure, homohexameric ring arranged as a trimer of dimers.

The catalysed reaction is tRNA(n+1) + phosphate = tRNA(n) + a ribonucleoside 5'-diphosphate. In terms of biological role, phosphorolytic 3'-5' exoribonuclease that plays an important role in tRNA 3'-end maturation. Removes nucleotide residues following the 3'-CCA terminus of tRNAs; can also add nucleotides to the ends of RNA molecules by using nucleoside diphosphates as substrates, but this may not be physiologically important. Probably plays a role in initiation of 16S rRNA degradation (leading to ribosome degradation) during starvation. In Rhizobium etli (strain CIAT 652), this protein is Ribonuclease PH.